Here is a 421-residue protein sequence, read N- to C-terminus: U-box domain-containing protein 26 (421 aa).

The region spanning 13–87 (QIPYHFRCPI…QEWCVANRSN (75 aa)) is the U-box domain.

The catalysed reaction is S-ubiquitinyl-[E2 ubiquitin-conjugating enzyme]-L-cysteine + [acceptor protein]-L-lysine = [E2 ubiquitin-conjugating enzyme]-L-cysteine + N(6)-ubiquitinyl-[acceptor protein]-L-lysine.. It participates in protein modification; protein ubiquitination. Functions as an E3 ubiquitin ligase. In Arabidopsis thaliana (Mouse-ear cress), this protein is U-box domain-containing protein 26 (PUB26).